Reading from the N-terminus, the 133-residue chain is Small ribosomal subunit protein uS9 (133 aa).

The segment at methionine 97–arginine 133 is disordered. Over residues lysine 114–arginine 133 the composition is skewed to basic residues.

The protein belongs to the universal ribosomal protein uS9 family.

In Chlamydia muridarum (strain MoPn / Nigg), this protein is Small ribosomal subunit protein uS9 (rpsI).